The primary structure comprises 144 residues: Superoxide dismutase [Mn], mitochondrial (144 aa).

Positions 10, 58, and 143 each coordinate Mn(2+).

This sequence belongs to the iron/manganese superoxide dismutase family. As to quaternary structure, homotetramer. The cofactor is Mn(2+).

It localises to the mitochondrion matrix. The enzyme catalyses 2 superoxide + 2 H(+) = H2O2 + O2. Its function is as follows. Destroys superoxide anion radicals which are normally produced within the cells and which are toxic to biological systems. The protein is Superoxide dismutase [Mn], mitochondrial of Palinurus vulgaris (European spiny lobster).